A 438-amino-acid chain; its full sequence is Elongation factor 1-alpha (438 aa).

The 224-residue stretch at 6–229 folds into the tr-type G domain; the sequence is KPHLNIVIIG…ALDTLEVPPK (224 aa). A G1 region spans residues 15-22; it reads GHVDHGKS. Residue 15–22 coordinates GTP; that stretch reads GHVDHGKS. Mg(2+) is bound at residue serine 22. The tract at residues 71–75 is G2; that stretch reads GVTIS. The G3 stretch occupies residues 92-95; sequence DAPG. GTP contacts are provided by residues 92–96 and 154–157; these read DAPGH and NKMD. Positions 154–157 are G4; that stretch reads NKMD. A G5 region spans residues 195–197; it reads SAW.

The protein belongs to the TRAFAC class translation factor GTPase superfamily. Classic translation factor GTPase family. EF-Tu/EF-1A subfamily.

Its subcellular location is the cytoplasm. The enzyme catalyses GTP + H2O = GDP + phosphate + H(+). Its function is as follows. GTP hydrolase that promotes the GTP-dependent binding of aminoacyl-tRNA to the A-site of ribosomes during protein biosynthesis. In Desulfurococcus mucosus (Desulfurococcus mobilis), this protein is Elongation factor 1-alpha.